The following is a 491-amino-acid chain: Lysine--tRNA ligase (491 aa).

Mg(2+) contacts are provided by glutamate 398 and glutamate 405.

Belongs to the class-II aminoacyl-tRNA synthetase family. As to quaternary structure, homodimer. Requires Mg(2+) as cofactor.

Its subcellular location is the cytoplasm. It carries out the reaction tRNA(Lys) + L-lysine + ATP = L-lysyl-tRNA(Lys) + AMP + diphosphate. The polypeptide is Lysine--tRNA ligase (Mycoplasmopsis synoviae (strain 53) (Mycoplasma synoviae)).